The sequence spans 435 residues: Methylenetetrahydrofolate--tRNA-(uracil-5-)-methyltransferase TrmFO (435 aa).

9-14 (GAGLAG) lines the FAD pocket.

This sequence belongs to the MnmG family. TrmFO subfamily. The cofactor is FAD.

It is found in the cytoplasm. The catalysed reaction is uridine(54) in tRNA + (6R)-5,10-methylene-5,6,7,8-tetrahydrofolate + NADH + H(+) = 5-methyluridine(54) in tRNA + (6S)-5,6,7,8-tetrahydrofolate + NAD(+). It carries out the reaction uridine(54) in tRNA + (6R)-5,10-methylene-5,6,7,8-tetrahydrofolate + NADPH + H(+) = 5-methyluridine(54) in tRNA + (6S)-5,6,7,8-tetrahydrofolate + NADP(+). Catalyzes the folate-dependent formation of 5-methyl-uridine at position 54 (M-5-U54) in all tRNAs. This is Methylenetetrahydrofolate--tRNA-(uracil-5-)-methyltransferase TrmFO from Staphylococcus saprophyticus subsp. saprophyticus (strain ATCC 15305 / DSM 20229 / NCIMB 8711 / NCTC 7292 / S-41).